The sequence spans 201 residues: MQTSPLLESLMEALRCLPGVGPKSAQRMAFQLLQRNRSGGMRLAQALTRAMSEIGHCSDCRTFTEQDVCAICSNPRRQQNGQICVVESPADIHAIEQTGQFAGRYFVLMGHLSPLDGIGPDDIGLGRLEERLQVESISEVILATNPTVEGDATANYIAELCAQHGVMASRIAHGVPVGGELEMVDGTTLSHSLAGRQPFRF.

The C4-type zinc-finger motif lies at 57–72 (CSDCRTFTEQDVCAIC). A Toprim domain is found at 81–176 (GQICVVESPA…MASRIAHGVP (96 aa)).

Belongs to the RecR family.

In terms of biological role, may play a role in DNA repair. It seems to be involved in an RecBC-independent recombinational process of DNA repair. It may act with RecF and RecO. The protein is Recombination protein RecR of Pectobacterium carotovorum subsp. carotovorum (strain PC1).